Here is a 404-residue protein sequence, read N- to C-terminus: Cytochrome b (404 aa).

Transmembrane regions (helical) follow at residues 35 to 55, 79 to 101, 116 to 136, and 182 to 202; these read FGSL…FLAM, WLLR…LHFF, VWCL…IGYV, and FFSL…LHLA. 2 residues coordinate heme b: H85 and H99. The heme b site is built by H186 and H200. A ubiquinone is bound at residue H205. 4 consecutive transmembrane segments (helical) span residues 228–248, 292–312, 324–344, and 351–370; these read IYVK…IFVF, LGGV…PFIN, IHQK…WIGC, and YVTI…AITP.

It belongs to the cytochrome b family. In terms of assembly, the main subunits of complex b-c1 are: cytochrome b, cytochrome c1 and the Rieske protein. Requires heme b as cofactor.

Its subcellular location is the mitochondrion inner membrane. Functionally, component of the ubiquinol-cytochrome c reductase complex (complex III or cytochrome b-c1 complex) that is part of the mitochondrial respiratory chain. The b-c1 complex mediates electron transfer from ubiquinol to cytochrome c. Contributes to the generation of a proton gradient across the mitochondrial membrane that is then used for ATP synthesis. This is Cytochrome b (MT-CYB) from Marchantia polymorpha (Common liverwort).